We begin with the raw amino-acid sequence, 533 residues long: Berberine bridge enzyme-like 28 (533 aa).

Residues 1–23 (MEFSSFLFTILLFSLNISPLVSA) form the signal peptide. The cysteines at positions 34 and 96 are disulfide-linked. Positions 74–249 (ETPKPVSIIT…LSWKVKLVDV (176 aa)) constitute an FAD-binding PCMH-type domain. His-111 is modified (pros-8alpha-FAD histidine). 2 N-linked (GlcNAc...) asparagine glycosylation sites follow: Asn-142 and Asn-440.

It belongs to the oxygen-dependent FAD-linked oxidoreductase family. Requires FAD as cofactor.

It localises to the secreted. Its subcellular location is the cell wall. Involved in adaptation to salt stress. The chain is Berberine bridge enzyme-like 28 from Arabidopsis thaliana (Mouse-ear cress).